A 300-amino-acid chain; its full sequence is Protein sprouty homolog 4 (300 aa).

N-acetylmethionine is present on Met1. Disordered regions lie at residues 1-28 (MEPP…SRAP) and 52-114 (DYID…RLLD). 2 stretches are compositionally biased toward low complexity: residues 7–21 (QSSV…MVQP) and 92–108 (SFSG…STSS). Position 126 is a phosphoserine (Ser126). The 108-residue stretch at 167–274 (KCKECASPRT…GYDRLRRPGC (108 aa)) folds into the SPR domain.

Belongs to the sprouty family. In terms of assembly, interacts (via C-terminus) with TESK1 (via both C- and N-termini); the interaction inhibits TESK1 kinase activity. Interacts with RAF1. Interacts with CAV1 (via C-terminus). As to expression, expressed in the embryo and adult tissues including heart, brain, lung, kidney, and skeletal muscle.

The protein resides in the cytoplasm. It is found in the cell projection. It localises to the ruffle membrane. Functionally, suppresses the insulin receptor and EGFR-transduced MAPK signaling pathway, but does not inhibit MAPK activation by a constitutively active mutant Ras. Probably impairs the formation of GTP-Ras. Inhibits Ras-independent, but not Ras-dependent, activation of RAF1. Represses integrin-mediated cell spreading via inhibition of TESK1-mediated phosphorylation of cofilin. The chain is Protein sprouty homolog 4 (Spry4) from Mus musculus (Mouse).